A 703-amino-acid chain; its full sequence is Protein STRUBBELIG-RECEPTOR FAMILY 8 (703 aa).

An N-terminal signal peptide occupies residues 1–27 (MAIGDRAMFTVLLLFIASISGFSVVRC). At 28-291 (VTDPSDVQAL…GKGLSGGVVT (264 aa)) the chain is on the extracellular side. LRR repeat units lie at residues 96–120 (LKSL…LPPN), 122–142 (TSLN…ISAM), 143–165 (GSLS…IFAD), 166–190 (HKSL…LSTV), 192–212 (TLSV…VLSG), 213–233 (LPLK…PKEL), and 234–256 (SSIQ…PQPE). Asn120, Asn130, Asn149, and Asn178 each carry an N-linked (GlcNAc...) asparagine glycan. N-linked (GlcNAc...) asparagine glycosylation is present at Asn226. Residues 247-284 (DNVPASPQPERPGKKETPSGSKKPKIGSEEKSSDSGKG) form a disordered region. Residues 292–312 (GIVFGSLFVAGIIALVLYLCL) traverse the membrane as a helical segment. The Cytoplasmic segment spans residues 313–703 (HKKKRKVRGS…PEHEHVDISF (391 aa)). One can recognise a Protein kinase domain in the interval 395–672 (FSQENIIGEG…SEVVQQLVRL (278 aa)). Residues 401-409 (IGEGSLGRV) and Lys423 each bind ATP.

This sequence belongs to the protein kinase superfamily. Ser/Thr protein kinase family. Expressed in seedlings, roots, stems, leaves, flowers and siliques.

It is found in the membrane. The sequence is that of Protein STRUBBELIG-RECEPTOR FAMILY 8 (SRF8) from Arabidopsis thaliana (Mouse-ear cress).